The chain runs to 431 residues: Putative F-box/FBD/LRR-repeat protein At3g56780 (431 aa).

Residues 6-62 form the F-box domain; sequence CSCINELPDDLILKILSFVSTKHVVVTSLLSKKWKSLWTRVPILKYDVRDHTRFERF. 8 LRR repeats span residues 56 to 82, 88 to 113, 135 to 161, 162 to 187, 209 to 236, 237 to 262, 264 to 285, and 357 to 382; these read HTRFERFLDKSLFSHQSHVLESLHVEL, NKDIGPWIRTALHHHHCHLRELEIDA, LKGIVIDVEAPLTTVSLPSLKTLHIDH, SSLFDFGSLQMLLSNCNFITDLMVIR, LEGLKDVISISSSSAVCLPLLKTLHVAR, MEDFNNDSFCRLLSNCPVLSDLTLEE, TSDVLLNLDIDMPYLQRLSIIT, and CSERSVEMLVDLLLCFTKLVVLKLEH. Residues 391-423 enclose the FBD domain; sequence RWEPPSLVPECLLSSLEALEWKGYTGRYGDKDL.

The polypeptide is Putative F-box/FBD/LRR-repeat protein At3g56780 (Arabidopsis thaliana (Mouse-ear cress)).